Here is a 176-residue protein sequence, read N- to C-terminus: I-Kappa-B like protein G1 (176 aa).

ANK repeat units follow at residues 56–88 (EGRQCTHIAAEYDVSNAVMKIELLVMLGADINS), 93–123 (FGNTLLHIAAGTENYQLAEWLCKKPGVELGA), and 127–156 (LYKTAYHIAYERQNARMMEILRVNGAVCDD).

It belongs to the polydnaviridae I-Kappa-B-like protein family.

In terms of biological role, suppresses the host immune response through NF-kappa-B inactivation. Possesses ankyrin repeat domains required for NF-kappa-B binding but lacks the regulatory regions required for dissociation from NF-kappa-B and degradation. Therefore, prevents host NF-kappa-B release and subsequent activation. The sequence is that of I-Kappa-B like protein G1 (G3) from Microplitis demolitor (Parasitoid wasp).